Consider the following 368-residue polypeptide: Ceramide synthase hyl-1 (368 aa).

7 helical membrane-spanning segments follow: residues 27-47 (FVDL…RILW), 92-112 (ILEC…GLYV), 138-158 (IWWY…GSTF), 165-185 (FWQL…SWTI), 191-211 (GTLI…GKLV), 225-245 (FVLF…FIVI), and 275-295 (LIVF…FIIL). In terms of domain architecture, TLC spans 90 to 303 (KKILECFWRF…ILRIAYRTST (214 aa)). The segment at 306 to 368 (QAKDVRSDSD…ARHRRAPRKE (63 aa)) is disordered. Residues 343–353 (TDDDDDEGEEE) are compositionally biased toward acidic residues. The span at 357 to 368 (RKARHRRAPRKE) shows a compositional bias: basic residues.

It belongs to the sphingosine N-acyltransferase family.

The protein localises to the membrane. It catalyses the reaction a very long-chain fatty acyl-CoA + a sphingoid base = an N-(very-long-chain fatty acyl)-sphingoid base + CoA + H(+). It carries out the reaction 15-methylhexadecasphinganine + a fatty acyl-CoA = an N-acyl-15-methylhexadecasphinganine + CoA + H(+). The catalysed reaction is a fatty acyl-CoA + sphinganine = an N-acylsphinganine + CoA + H(+). The enzyme catalyses sphinganine + tetradecanoyl-CoA = N-(tetradecanoyl)-sphinganine + CoA + H(+). It catalyses the reaction hexacosanoyl-CoA + sphinganine = N-hexacosanoylsphinganine + CoA + H(+). It participates in lipid metabolism; sphingolipid metabolism. Functionally, catalyzes the acylation of sphingoid bases to form ceramides, which are key players in cell signaling events such as extending lifespan and enhancing stress resistance. C.elegans contain specific sphingoid bases, which are unique or different in structure compared to the sphingoid bases found in other animals. Two examples of these distinctive compounds are: 15-methylhexadecasphinganine and 15-methylhexadecasphing-4-enine. Exhibits substrate preference for fatty acyl-coA chains containing carbon chain length (C16-C18) and very long chains (24 carbons and more). This is Ceramide synthase hyl-1 (hyl-1) from Caenorhabditis elegans.